The chain runs to 216 residues: Octanoyltransferase (216 aa).

The 176-residue stretch at 34 to 209 (ENTIDEIWLV…KMNQQLDYSH (176 aa)) folds into the BPL/LPL catalytic domain. Substrate contacts are provided by residues 73–80 (RGGQITFH), 140–142 (SLG), and 153–155 (GLA). Cys171 (acyl-thioester intermediate) is an active-site residue.

It belongs to the LipB family.

It localises to the cytoplasm. It carries out the reaction octanoyl-[ACP] + L-lysyl-[protein] = N(6)-octanoyl-L-lysyl-[protein] + holo-[ACP] + H(+). Its pathway is protein modification; protein lipoylation via endogenous pathway; protein N(6)-(lipoyl)lysine from octanoyl-[acyl-carrier-protein]: step 1/2. Its function is as follows. Catalyzes the transfer of endogenously produced octanoic acid from octanoyl-acyl-carrier-protein onto the lipoyl domains of lipoate-dependent enzymes. Lipoyl-ACP can also act as a substrate although octanoyl-ACP is likely to be the physiological substrate. This is Octanoyltransferase from Psychromonas ingrahamii (strain DSM 17664 / CCUG 51855 / 37).